The chain runs to 274 residues: Probable ribosomal RNA small subunit methyltransferase A (274 aa).

S-adenosyl-L-methionine-binding residues include H22, L24, G50, E71, D99, and N114.

This sequence belongs to the class I-like SAM-binding methyltransferase superfamily. rRNA adenine N(6)-methyltransferase family. RsmA subfamily.

The protein resides in the cytoplasm. Specifically dimethylates two adjacent adenosines in the loop of a conserved hairpin near the 3'-end of 16S rRNA in the 30S particle. May play a critical role in biogenesis of 30S subunits. This chain is Probable ribosomal RNA small subunit methyltransferase A, found in Natronomonas pharaonis (strain ATCC 35678 / DSM 2160 / CIP 103997 / JCM 8858 / NBRC 14720 / NCIMB 2260 / Gabara) (Halobacterium pharaonis).